The chain runs to 68 residues: DNA-directed RNA polymerase subunit omega (68 aa).

This sequence belongs to the RNA polymerase subunit omega family. As to quaternary structure, the RNAP catalytic core consists of 2 alpha, 1 beta, 1 beta' and 1 omega subunit. When a sigma factor is associated with the core the holoenzyme is formed, which can initiate transcription.

It catalyses the reaction RNA(n) + a ribonucleoside 5'-triphosphate = RNA(n+1) + diphosphate. Its function is as follows. Promotes RNA polymerase assembly. Latches the N- and C-terminal regions of the beta' subunit thereby facilitating its interaction with the beta and alpha subunits. The chain is DNA-directed RNA polymerase subunit omega from Neisseria gonorrhoeae (strain NCCP11945).